The following is a 422-amino-acid chain: Putative polyketide beta-ketoacyl synthase 1 (422 aa).

Residues 2-416 (TRRVAVTGIG…GFQSAVLLTG (415 aa)) form the Ketosynthase family 3 (KS3) domain. Catalysis depends on for beta-ketoacyl synthase activity residues Cys-169, His-309, and His-346.

Belongs to the thiolase-like superfamily. Beta-ketoacyl-ACP synthases family.

It participates in antibiotic biosynthesis; curamycin biosynthesis. This Streptomyces cyaneus (Streptomyces curacoi) protein is Putative polyketide beta-ketoacyl synthase 1 (curA).